The chain runs to 475 residues: Gamma-aminobutyric acid receptor subunit gamma-2 (475 aa).

Positions 1–39 are cleaved as a signal peptide; the sequence is MSSPNIWSTGSSVYSTPVFSQKMTVWILLLLSLYPGFTS. Residues 40–275 are Extracellular-facing; the sequence is QKSDDDYEDY…FDLSRRMGYF (236 aa). N-linked (GlcNAc...) asparagine glycans are attached at residues asparagine 52 and asparagine 129. A disulfide bridge links cysteine 190 with cysteine 204. An N-linked (GlcNAc...) asparagine glycan is attached at asparagine 247. The chain crosses the membrane as a helical span at residues 276 to 296; sequence TIQTYIPCTLIVVLSWVSFWI. At 297–302 the chain is on the cytoplasmic side; that stretch reads NKDAVP. A helical membrane pass occupies residues 303–322; the sequence is ARTSLGITTVLTMTTLSTIA. Over 323-334 the chain is Extracellular; sequence RKSLPKVSYVTA. The helical transmembrane segment at 335-359 threads the bilayer; that stretch reads MDLFVSVCFIFVFSALVEYGTLHYF. Topologically, residues 360–451 are cytoplasmic; it reads VSNRKPSKDK…IHIRIAKMDS (92 aa). The tract at residues 433 to 450 is interaction with GABARAP; it reads RTGAWRHGRIHIRIAKMD. A helical transmembrane segment spans residues 452 to 472; it reads YARIFFPTAFCLFNLVYWVSY. The Extracellular portion of the chain corresponds to 473 to 475; that stretch reads LYL.

The protein belongs to the ligand-gated ion channel (TC 1.A.9) family. Gamma-aminobutyric acid receptor (TC 1.A.9.5) subfamily. GABRG2 sub-subfamily. Heteropentamer, formed by a combination of alpha (GABRA1-6), beta (GABRB1-3), gamma (GABRG1-3), delta (GABRD), epsilon (GABRE), rho (GABRR1-3), pi (GABRP) and theta (GABRQ) chains, each subunit exhibiting distinct physiological and pharmacological properties. Interacts with GABARAP. Interacts with KIF21B. Identified in a complex of 720 kDa composed of LHFPL4, NLGN2, GABRA1, GABRB2, GABRG2 and GABRB3. Interacts with LHFPL4. Interacts with SHISA7; interaction leads to the regulation of GABA(A) receptor trafficking, channel deactivation kinetics and pharmacology. In terms of processing, palmitoylated by ZDHHC3/GODZ; required for the accumulation of GABA(A) receptors at the postsynaptic membrane of inhibitory GABAergic synapses.

Its subcellular location is the postsynaptic cell membrane. The protein resides in the cell membrane. It is found in the cell projection. The protein localises to the dendrite. It localises to the cytoplasmic vesicle membrane. It catalyses the reaction chloride(in) = chloride(out). Its activity is regulated as follows. Allosterically activated by benzodiazepines. Activated by pentobarbital. Potentiated by etomidate, propofol, pregnanolone. Inhibited by the antagonist bicuculline. Inhibited by zinc ions. Potentiated by histamine. In terms of biological role, gamma subunit of the heteropentameric ligand-gated chloride channel gated by gamma-aminobutyric acid (GABA), a major inhibitory neurotransmitter in the brain. GABA-gated chloride channels, also named GABA(A) receptors (GABAAR), consist of five subunits arranged around a central pore and contain GABA active binding site(s) located at the alpha and beta subunit interface(s). When activated by GABA, GABAARs selectively allow the flow of chloride anions across the cell membrane down their electrochemical gradient. Gamma-2/GABRG2-containing GABAARs are found at both synaptic and extrasynaptic sites. Chloride influx into the postsynaptic neuron following GABAAR opening decreases the neuron ability to generate a new action potential, thereby reducing nerve transmission. GABAARs containing alpha-1 and beta-2 or -3 subunits exhibit synaptogenic activity; the gamma-2 subunit being necessary but not sufficient to induce rapid synaptic contacts formation. Extrasynaptic gamma-2-containing receptors contribute to the tonic GABAergic inhibition. GABAARs function also as histamine receptor where histamine binds at the interface of two neighboring beta subunits and potentiates GABA response in a gamma-2 subunit-controlled manner. The polypeptide is Gamma-aminobutyric acid receptor subunit gamma-2 (Homo sapiens (Human)).